Here is a 768-residue protein sequence, read N- to C-terminus: 5-methyltetrahydropteroyltriglutamate--homocysteine methyltransferase (768 aa).

5-methyltetrahydropteroyltri-L-glutamate contacts are provided by residues 17 to 20 and K113; that span reads REWK. Residues 440–442 and E493 each bind L-homocysteine; that span reads IGS. L-methionine contacts are provided by residues 440–442 and E493; that span reads IGS. W570 serves as a coordination point for 5-methyltetrahydropteroyltri-L-glutamate. D608 is a binding site for L-homocysteine. D608 provides a ligand contact to L-methionine. Residue E614 participates in 5-methyltetrahydropteroyltri-L-glutamate binding. H650, C652, and E674 together coordinate Zn(2+). The Proton donor role is filled by H703. C735 contributes to the Zn(2+) binding site.

It belongs to the vitamin-B12 independent methionine synthase family. Requires Zn(2+) as cofactor.

It catalyses the reaction 5-methyltetrahydropteroyltri-L-glutamate + L-homocysteine = tetrahydropteroyltri-L-glutamate + L-methionine. Its pathway is amino-acid biosynthesis; L-methionine biosynthesis via de novo pathway; L-methionine from L-homocysteine (MetE route): step 1/1. Functionally, catalyzes the transfer of a methyl group from 5-methyltetrahydrofolate to homocysteine resulting in methionine formation. This Lactiplantibacillus plantarum (strain ATCC BAA-793 / NCIMB 8826 / WCFS1) (Lactobacillus plantarum) protein is 5-methyltetrahydropteroyltriglutamate--homocysteine methyltransferase.